A 232-amino-acid polypeptide reads, in one-letter code: Large ribosomal subunit protein uL1 (232 aa).

The protein belongs to the universal ribosomal protein uL1 family. In terms of assembly, part of the 50S ribosomal subunit.

Binds directly to 23S rRNA. The L1 stalk is quite mobile in the ribosome, and is involved in E site tRNA release. Functionally, protein L1 is also a translational repressor protein, it controls the translation of the L11 operon by binding to its mRNA. The protein is Large ribosomal subunit protein uL1 of Dinoroseobacter shibae (strain DSM 16493 / NCIMB 14021 / DFL 12).